The chain runs to 546 residues: 6'''-hydroxyparomomycin C oxidase (546 aa).

The segment at 1-30 is disordered; the sequence is MERLRGPSPLENTTARHPAPLGPAHRDGLE. Histidine 475 (proton acceptor) is an active-site residue.

Belongs to the GMC oxidoreductase family. The cofactor is FAD.

Its pathway is antibiotic biosynthesis; lividomycin biosynthesis. In terms of biological role, glucosaminyl-6'-oxidase involved in the biosynthetic pathway of lividomycin by mediating FAD-dependent dehydrogenation of 6'''-hydroxyparomomycin to paromomycin. This chain is 6'''-hydroxyparomomycin C oxidase (livQ), found in Streptomyces lividus.